Reading from the N-terminus, the 65-residue chain is Putative per-hexamer repeat protein 2 (65 aa).

In Mus musculus (Mouse), this protein is Putative per-hexamer repeat protein 2 (Phxr2).